A 726-amino-acid polypeptide reads, in one-letter code: Procollagen-lysine,2-oxoglutarate 5-dioxygenase 1 (726 aa).

The first 18 residues, 1 to 18 (MRLLLLLAPLGWLLLAET), serve as a signal peptide directing secretion. N196 and N537 each carry an N-linked (GlcNAc...) asparagine glycan. A Fe2OG dioxygenase domain is found at 635 to 726 (QFDLAFVVRY…RYIAVSFVDP (92 aa)). H655 and D657 together coordinate Fe cation. N685 carries an N-linked (GlcNAc...) asparagine glycan. Residue H707 participates in Fe cation binding. Residue R717 is part of the active site.

Homodimer. Identified in a complex with P3H3 and P3H4. Requires Fe(2+) as cofactor. L-ascorbate is required as a cofactor.

The protein localises to the rough endoplasmic reticulum membrane. It catalyses the reaction L-lysyl-[collagen] + 2-oxoglutarate + O2 = (5R)-5-hydroxy-L-lysyl-[collagen] + succinate + CO2. Part of a complex composed of PLOD1, P3H3 and P3H4 that catalyzes hydroxylation of lysine residues in collagen alpha chains and is required for normal assembly and cross-linkling of collagen fibrils. Forms hydroxylysine residues in -Xaa-Lys-Gly- sequences in collagens. These hydroxylysines serve as sites of attachment for carbohydrate units and are essential for the stability of the intermolecular collagen cross-links. The sequence is that of Procollagen-lysine,2-oxoglutarate 5-dioxygenase 1 (PLOD1) from Bos taurus (Bovine).